The sequence spans 211 residues: N-(5'-phosphoribosyl)anthranilate isomerase (211 aa).

The protein belongs to the TrpF family.

The enzyme catalyses N-(5-phospho-beta-D-ribosyl)anthranilate = 1-(2-carboxyphenylamino)-1-deoxy-D-ribulose 5-phosphate. It functions in the pathway amino-acid biosynthesis; L-tryptophan biosynthesis; L-tryptophan from chorismate: step 3/5. This Methanococcus maripaludis (strain C6 / ATCC BAA-1332) protein is N-(5'-phosphoribosyl)anthranilate isomerase.